A 348-amino-acid chain; its full sequence is Isopentenyl-diphosphate delta-isomerase (348 aa).

A substrate-binding site is contributed by 5–6; that stretch reads RK. Residues serine 61, 62–64, serine 92, and asparagine 120 each bind FMN; that span reads SMT. Position 92-94 (92-94) interacts with substrate; it reads SMR. Glutamine 159 contacts substrate. Residue glutamate 160 participates in Mg(2+) binding. FMN-binding positions include lysine 189, serine 214, threonine 219, 269–271, and 290–291; these read GLR and AR.

Belongs to the IPP isomerase type 2 family. As to quaternary structure, homooctamer. Dimer of tetramers. Requires FMN as cofactor. It depends on NADPH as a cofactor. The cofactor is Mg(2+).

The protein localises to the cytoplasm. It carries out the reaction isopentenyl diphosphate = dimethylallyl diphosphate. In terms of biological role, involved in the biosynthesis of isoprenoids. Catalyzes the 1,3-allylic rearrangement of the homoallylic substrate isopentenyl (IPP) to its allylic isomer, dimethylallyl diphosphate (DMAPP). This is Isopentenyl-diphosphate delta-isomerase from Thermoplasma acidophilum (strain ATCC 25905 / DSM 1728 / JCM 9062 / NBRC 15155 / AMRC-C165).